Consider the following 318-residue polypeptide: Acetaldehyde dehydrogenase 1 (318 aa).

15–18 (SGNI) is a binding site for NAD(+). The active-site Acyl-thioester intermediate is the C133. Residues 164–172 (SAGPGTRAN) and N289 contribute to the NAD(+) site.

Belongs to the acetaldehyde dehydrogenase family.

The catalysed reaction is acetaldehyde + NAD(+) + CoA = acetyl-CoA + NADH + H(+). This Azotobacter vinelandii (strain DJ / ATCC BAA-1303) protein is Acetaldehyde dehydrogenase 1 (xylQ).